Here is a 337-residue protein sequence, read N- to C-terminus: ATP-dependent 6-phosphofructokinase (337 aa).

G11 contributes to the ATP binding site. 21–25 provides a ligand contact to ADP; that stretch reads RAVVR. ATP contacts are provided by residues 72–73 and 102–105; these read RY and GDGS. D103 contacts Mg(2+). 125–127 contacts substrate; sequence TID. D127 serves as the catalytic Proton acceptor. Residue R154 participates in ADP binding. Substrate is bound by residues R162 and 169–171; that span reads MGR. Residues 185 to 187, K212, and 214 to 216 contribute to the ADP site; these read GAD and KNH. Substrate is bound by residues E223, R245, and 251 to 254; that span reads HILR.

It belongs to the phosphofructokinase type A (PFKA) family. ATP-dependent PFK group I subfamily. Prokaryotic clade 'B1' sub-subfamily. As to quaternary structure, homotetramer. Mg(2+) is required as a cofactor.

The protein resides in the cytoplasm. The catalysed reaction is beta-D-fructose 6-phosphate + ATP = beta-D-fructose 1,6-bisphosphate + ADP + H(+). It functions in the pathway carbohydrate degradation; glycolysis; D-glyceraldehyde 3-phosphate and glycerone phosphate from D-glucose: step 3/4. With respect to regulation, allosterically activated by ADP and other diphosphonucleosides, and allosterically inhibited by phosphoenolpyruvate. In terms of biological role, catalyzes the phosphorylation of D-fructose 6-phosphate to fructose 1,6-bisphosphate by ATP, the first committing step of glycolysis. This chain is ATP-dependent 6-phosphofructokinase, found in Streptococcus pyogenes serotype M3 (strain SSI-1).